The primary structure comprises 324 residues: NADH-ubiquinone oxidoreductase chain 1 (324 aa).

8 helical membrane-spanning segments follow: residues 3–23 (LLFM…AVAF), 73–93 (LLFI…WTPF), 106–126 (ILFI…SGWA), 151–171 (ALII…AFAI), 175–195 (FTWF…STLA), 226–246 (LFFL…TIIF), 255–275 (TLTT…FLWV), and 295–315 (FLPL…SLLF).

It belongs to the complex I subunit 1 family.

Its subcellular location is the mitochondrion inner membrane. The enzyme catalyses a ubiquinone + NADH + 5 H(+)(in) = a ubiquinol + NAD(+) + 4 H(+)(out). Functionally, core subunit of the mitochondrial membrane respiratory chain NADH dehydrogenase (Complex I) that is believed to belong to the minimal assembly required for catalysis. Complex I functions in the transfer of electrons from NADH to the respiratory chain. The immediate electron acceptor for the enzyme is believed to be ubiquinone. This is NADH-ubiquinone oxidoreductase chain 1 (MT-ND1) from Aquarana catesbeiana (American bullfrog).